Consider the following 653-residue polypeptide: Large subunit GTPase 1 homolog (653 aa).

Positions 1-47 are disordered; that stretch reads MGKKRGTGLGRSLQRQRGSERRGASSWLHASEVVGESGPERRSAVEQ. The CP-type G domain occupies 155–439; it reads WRQLWRVIER…LCDCPGLVMP (285 aa). 203-206 serves as a coordination point for GTP; that stretch reads NKAD. Over residues 248-275 the composition is skewed to acidic residues; it reads ADSVADDLSDSEEESSSQEEDVTAEDSA. Positions 248–323 are disordered; it reads ADSVADDLSD…TCSEDEGGDK (76 aa). A compositionally biased stretch (polar residues) spans 276–291; it reads ESTSTGSALQTENQCL. Over residues 293 to 320 the composition is skewed to acidic residues; sequence SDDDSSDEYEDCEDEEEDDWQTCSEDEG. Residues 388 to 395 and 432 to 435 each bind GTP; these read GYPNVGKS and DCPG. The tract at residues 621–653 is disordered; it reads APSAGSVVGKPWKKHGNRNKKEKVRRITKHLEN. Residues 631 to 653 show a composition bias toward basic residues; that stretch reads PWKKHGNRNKKEKVRRITKHLEN.

This sequence belongs to the TRAFAC class YlqF/YawG GTPase family. LSG1 subfamily.

It localises to the cytoplasm. The protein resides in the endoplasmic reticulum. Its subcellular location is the nucleus. The protein localises to the cajal body. It carries out the reaction GTP + H2O = GDP + phosphate + H(+). GTPase required for the XPO1/CRM1-mediated nuclear export of the 60S ribosomal subunit. Probably acts by mediating the release of NMD3 from the 60S ribosomal subunit after export into the cytoplasm. Its function is as follows. Functions as a GTPase. May act by mediating the release of NMD3 from the 60S ribosomal subunit after export into the cytoplasm during the 60S ribosomal subunit maturation. The protein is Large subunit GTPase 1 homolog of Gallus gallus (Chicken).